Here is a 141-residue protein sequence, read N- to C-terminus: Transcription antitermination protein NusB (141 aa).

The protein belongs to the NusB family.

Functionally, involved in transcription antitermination. Required for transcription of ribosomal RNA (rRNA) genes. Binds specifically to the boxA antiterminator sequence of the ribosomal RNA (rrn) operons. This Neisseria gonorrhoeae (strain ATCC 700825 / FA 1090) protein is Transcription antitermination protein NusB.